The sequence spans 433 residues: Amino-acid acetyltransferase (433 aa).

Positions 287–426 (ELVREAAIED…ASLYNYQRNS (140 aa)) constitute an N-acetyltransferase domain.

This sequence belongs to the acetyltransferase family. ArgA subfamily.

The protein resides in the cytoplasm. The enzyme catalyses L-glutamate + acetyl-CoA = N-acetyl-L-glutamate + CoA + H(+). It functions in the pathway amino-acid biosynthesis; L-arginine biosynthesis; N(2)-acetyl-L-ornithine from L-glutamate: step 1/4. This is Amino-acid acetyltransferase from Pseudomonas fluorescens (strain SBW25).